A 567-amino-acid chain; its full sequence is DNA ligase B (567 aa).

The N6-AMP-lysine intermediate role is filled by Lys132.

This sequence belongs to the NAD-dependent DNA ligase family. LigB subfamily.

The catalysed reaction is NAD(+) + (deoxyribonucleotide)n-3'-hydroxyl + 5'-phospho-(deoxyribonucleotide)m = (deoxyribonucleotide)n+m + AMP + beta-nicotinamide D-nucleotide.. In terms of biological role, catalyzes the formation of phosphodiester linkages between 5'-phosphoryl and 3'-hydroxyl groups in double-stranded DNA using NAD as a coenzyme and as the energy source for the reaction. The polypeptide is DNA ligase B (Yersinia pseudotuberculosis serotype O:1b (strain IP 31758)).